Consider the following 362-residue polypeptide: MAQVYNFSSGPAMLPAEVLKLAQQELCDWHGLGTSVMEISHRGKEFIQVAEEAEQDFRALLNIPSNYKVLFCHGGGRGQFAGIPLNILGDKKVADYVDAGYWAASAVKEAKKYCTPNVIDAKITVDGKRAVKPMSEWQLTPGAAYLHYCPNETIDGIAIDETPNFGDDVIVTADFSSTILSREIDVNRFGVIYAGAQKNIGPAGLTLVIVREDLLGKASVACPSILDYTVLSENDSMFNTPPTFAWYLAGLVFKWLKQQGGVAAMDKINQQKAELLYGVIDNSGFYRNDVAQANRSRMNVPFQLADSALDKLFLEESFAAGLHALKGHRVVGGMRASIYNAMPLDGVKTLTDFMLDFERRHG.

L-glutamate contacts are provided by Ser9 and Arg42. Residues 76–77, Trp102, Thr153, Asp174, and Gln197 each bind pyridoxal 5'-phosphate; that span reads GR. Position 198 is an N6-(pyridoxal phosphate)lysine (Lys198). Pyridoxal 5'-phosphate is bound at residue 239 to 240; it reads NT.

The protein belongs to the class-V pyridoxal-phosphate-dependent aminotransferase family. SerC subfamily. In terms of assembly, homodimer. Pyridoxal 5'-phosphate is required as a cofactor.

It localises to the cytoplasm. The enzyme catalyses O-phospho-L-serine + 2-oxoglutarate = 3-phosphooxypyruvate + L-glutamate. The catalysed reaction is 4-(phosphooxy)-L-threonine + 2-oxoglutarate = (R)-3-hydroxy-2-oxo-4-phosphooxybutanoate + L-glutamate. It functions in the pathway amino-acid biosynthesis; L-serine biosynthesis; L-serine from 3-phospho-D-glycerate: step 2/3. Its pathway is cofactor biosynthesis; pyridoxine 5'-phosphate biosynthesis; pyridoxine 5'-phosphate from D-erythrose 4-phosphate: step 3/5. Catalyzes the reversible conversion of 3-phosphohydroxypyruvate to phosphoserine and of 3-hydroxy-2-oxo-4-phosphonooxybutanoate to phosphohydroxythreonine. The protein is Phosphoserine aminotransferase of Klebsiella pneumoniae subsp. pneumoniae (strain ATCC 700721 / MGH 78578).